We begin with the raw amino-acid sequence, 100 residues long: Urease subunit gamma (100 aa).

This sequence belongs to the urease gamma subunit family. In terms of assembly, heterotrimer of UreA (gamma), UreB (beta) and UreC (alpha) subunits. Three heterotrimers associate to form the active enzyme.

The protein resides in the cytoplasm. The catalysed reaction is urea + 2 H2O + H(+) = hydrogencarbonate + 2 NH4(+). Its pathway is nitrogen metabolism; urea degradation; CO(2) and NH(3) from urea (urease route): step 1/1. This chain is Urease subunit gamma, found in Acinetobacter baumannii (strain AB307-0294).